Reading from the N-terminus, the 262-residue chain is GDT1-like protein C186.05c (262 aa).

5 helical membrane passes run 31-51 (ISMIIGCELGDKSFIVTALLA), 57-77 (ASVFFGSYLALFFMTSFAVLV), 83-103 (FLFPKSITHILGGTLFLIFGV), 208-228 (VLDVFIGVNIGHMLCTMVAVI), and 242-262 (VLFFGGIVFMIFGILYIFQGF).

This sequence belongs to the GDT1 family.

It localises to the endoplasmic reticulum membrane. This chain is GDT1-like protein C186.05c, found in Schizosaccharomyces pombe (strain 972 / ATCC 24843) (Fission yeast).